Here is a 489-residue protein sequence, read N- to C-terminus: UDP-N-acetylmuramoyl-L-alanyl-D-glutamate--2,6-diaminopimelate ligase (489 aa).

UDP-N-acetyl-alpha-D-muramoyl-L-alanyl-D-glutamate is bound at residue serine 30. ATP is bound at residue 113 to 119 (GTNGKTS). UDP-N-acetyl-alpha-D-muramoyl-L-alanyl-D-glutamate contacts are provided by residues 155–156 (TT), serine 182, glutamine 188, and arginine 190. N6-carboxylysine is present on lysine 222. Residues arginine 388, 412-415 (DNPR), glycine 463, and glutamate 467 contribute to the meso-2,6-diaminopimelate site. The Meso-diaminopimelate recognition motif motif lies at 412–415 (DNPR).

This sequence belongs to the MurCDEF family. MurE subfamily. The cofactor is Mg(2+). In terms of processing, carboxylation is probably crucial for Mg(2+) binding and, consequently, for the gamma-phosphate positioning of ATP.

The protein resides in the cytoplasm. The catalysed reaction is UDP-N-acetyl-alpha-D-muramoyl-L-alanyl-D-glutamate + meso-2,6-diaminopimelate + ATP = UDP-N-acetyl-alpha-D-muramoyl-L-alanyl-gamma-D-glutamyl-meso-2,6-diaminopimelate + ADP + phosphate + H(+). The protein operates within cell wall biogenesis; peptidoglycan biosynthesis. Functionally, catalyzes the addition of meso-diaminopimelic acid to the nucleotide precursor UDP-N-acetylmuramoyl-L-alanyl-D-glutamate (UMAG) in the biosynthesis of bacterial cell-wall peptidoglycan. This is UDP-N-acetylmuramoyl-L-alanyl-D-glutamate--2,6-diaminopimelate ligase from Coxiella burnetii (strain RSA 493 / Nine Mile phase I).